Consider the following 912-residue polypeptide: Ubiquitin carboxyl-terminal hydrolase 20 (912 aa).

The UBP-type zinc-finger motif lies at 6–111; it reads DLCPHLDSIG…GPAPKFSEQD (106 aa). The Zn(2+) site is built by Cys8, His10, Cys30, Cys33, Cys43, Cys48, Cys53, His60, His64, His70, Cys83, and Cys86. The disordered stretch occupies residues 101-120; sequence PGPAPKFSEQDSPPPSHPLK. Ser112, Ser132, and Ser134 each carry phosphoserine. Positions 145–683 constitute a USP domain; sequence TGMKNLGNSC…EAYVLFYRKS (539 aa). Cys154 acts as the Nucleophile in catalysis. 2 disordered regions span residues 258–308 and 322–415; these read LTEA…GSQA and ISEK…ASPV. Residue Thr259 is modified to Phosphothreonine. The segment covering 260–280 has biased composition (basic and acidic residues); it reads EARDSDSSDTDEKREGDRSPS. Phosphoserine is present on Ser306. Basic and acidic residues predominate over residues 322 to 333; the sequence is ISEKERMKDRKF. Residue Ser369 is modified to Phosphoserine. Thr378 is modified (phosphothreonine). Phosphoserine occurs at positions 408 and 413. His641 (proton acceptor) is an active-site residue. DUSP domains are found at residues 685–778 and 787–890; these read EEAV…LYVC and ALAK…RQSV.

It belongs to the peptidase C19 family. USP20/USP33 subfamily. Interacts with VHL, leading to its ubiquitination and subsequent degradation. Interacts with CCP110. Interacts with DIO2. Interacts with HIF1A. Interacts with ADRB2. Interacts with USP18. Ubiquitinated via a VHL-dependent pathway for proteasomal degradation.

It is found in the cytoplasm. The protein localises to the endoplasmic reticulum. The protein resides in the perinuclear region. It localises to the cytoskeleton. Its subcellular location is the microtubule organizing center. It is found in the centrosome. The catalysed reaction is Thiol-dependent hydrolysis of ester, thioester, amide, peptide and isopeptide bonds formed by the C-terminal Gly of ubiquitin (a 76-residue protein attached to proteins as an intracellular targeting signal).. Deubiquitinating enzyme that plays a role in many cellular processes including autophagy, cellular antiviral response or membrane protein biogenesis. Attenuates TLR4-mediated NF-kappa-B signaling by cooperating with beta-arrestin-2/ARRB2 and inhibiting TRAF6 autoubiquitination. Promotes cellular antiviral responses by deconjugating 'Lys-33' and 'Lys-48'-linked ubiquitination of STING1 leading to its stabilization. Plays an essential role in autophagy induction by regulating the ULK1 stability through deubiquitination of ULK1. Acts as a positive regulator for NF-kappa-B activation by TNF-alpha through deubiquitinating 'Lys-48'-linked polyubiquitination of SQSTM1, leading to its increased stability. Acts as a regulator of G-protein coupled receptor (GPCR) signaling by mediating the deubiquitination beta-2 adrenergic receptor (ADRB2). Plays a central role in ADRB2 recycling and resensitization after prolonged agonist stimulation by constitutively binding ADRB2, mediating deubiquitination of ADRB2 and inhibiting lysosomal trafficking of ADRB2. Upon dissociation, it is probably transferred to the translocated beta-arrestins, possibly leading to beta-arrestins deubiquitination and disengagement from ADRB2. This suggests the existence of a dynamic exchange between the ADRB2 and beta-arrestins. Deubiquitinates DIO2, thereby regulating thyroid hormone regulation. Deubiquitinates HIF1A, leading to stabilize HIF1A and enhance HIF1A-mediated activity. Deubiquitinates MCL1, a pivotal member of the anti-apoptotic Bcl-2 protein family to regulate its stability. Within the endoplasmic reticulum, participates with USP33 in the rescue of post-translationally targeted membrane proteins that are inappropriately ubiquitinated by the cytosolic protein quality control in the cytosol. The protein is Ubiquitin carboxyl-terminal hydrolase 20 (USP20) of Bos taurus (Bovine).